The following is a 152-amino-acid chain: Large ribosomal subunit protein bL9 (152 aa).

This sequence belongs to the bacterial ribosomal protein bL9 family.

Binds to the 23S rRNA. In Mycobacterium ulcerans (strain Agy99), this protein is Large ribosomal subunit protein bL9.